A 331-amino-acid polypeptide reads, in one-letter code: Ketol-acid reductoisomerase (NADP(+)) (331 aa).

One can recognise a KARI N-terminal Rossmann domain in the interval 2–182 (IKKYYDADCN…GAGRAGILET (181 aa)). NADP(+) is bound by residues 25–28 (YGSQ), arginine 48, and serine 51. Histidine 108 is a catalytic residue. Residue glycine 134 participates in NADP(+) binding. Positions 183–329 (TFREETETDL…AELRKMMSWI (147 aa)) constitute a KARI C-terminal knotted domain. Mg(2+) is bound by residues aspartate 191, glutamate 195, glutamate 227, and glutamate 231. Substrate is bound at residue serine 252.

The protein belongs to the ketol-acid reductoisomerase family. Mg(2+) is required as a cofactor.

It catalyses the reaction (2R)-2,3-dihydroxy-3-methylbutanoate + NADP(+) = (2S)-2-acetolactate + NADPH + H(+). The catalysed reaction is (2R,3R)-2,3-dihydroxy-3-methylpentanoate + NADP(+) = (S)-2-ethyl-2-hydroxy-3-oxobutanoate + NADPH + H(+). The protein operates within amino-acid biosynthesis; L-isoleucine biosynthesis; L-isoleucine from 2-oxobutanoate: step 2/4. It participates in amino-acid biosynthesis; L-valine biosynthesis; L-valine from pyruvate: step 2/4. Its function is as follows. Involved in the biosynthesis of branched-chain amino acids (BCAA). Catalyzes an alkyl-migration followed by a ketol-acid reduction of (S)-2-acetolactate (S2AL) to yield (R)-2,3-dihydroxy-isovalerate. In the isomerase reaction, S2AL is rearranged via a Mg-dependent methyl migration to produce 3-hydroxy-3-methyl-2-ketobutyrate (HMKB). In the reductase reaction, this 2-ketoacid undergoes a metal-dependent reduction by NADPH to yield (R)-2,3-dihydroxy-isovalerate. The protein is Ketol-acid reductoisomerase (NADP(+)) of Brachyspira hyodysenteriae (strain ATCC 49526 / WA1).